Here is a 413-residue protein sequence, read N- to C-terminus: Glucose-1-phosphate adenylyltransferase (413 aa).

Alpha-D-glucose 1-phosphate-binding positions include glycine 169, 184–185, and serine 201; that span reads EK.

Belongs to the bacterial/plant glucose-1-phosphate adenylyltransferase family. As to quaternary structure, homotetramer.

It catalyses the reaction alpha-D-glucose 1-phosphate + ATP + H(+) = ADP-alpha-D-glucose + diphosphate. It functions in the pathway glycan biosynthesis; glycogen biosynthesis. Involved in the biosynthesis of ADP-glucose, a building block required for the elongation reactions to produce glycogen. Catalyzes the reaction between ATP and alpha-D-glucose 1-phosphate (G1P) to produce pyrophosphate and ADP-Glc. This chain is Glucose-1-phosphate adenylyltransferase, found in Trichlorobacter lovleyi (strain ATCC BAA-1151 / DSM 17278 / SZ) (Geobacter lovleyi).